Reading from the N-terminus, the 392-residue chain is Phosphopentomutase (392 aa).

Mn(2+) contacts are provided by aspartate 14, aspartate 286, histidine 291, aspartate 327, histidine 328, and histidine 339.

It belongs to the phosphopentomutase family. Mn(2+) serves as cofactor.

The protein localises to the cytoplasm. It catalyses the reaction 2-deoxy-alpha-D-ribose 1-phosphate = 2-deoxy-D-ribose 5-phosphate. It carries out the reaction alpha-D-ribose 1-phosphate = D-ribose 5-phosphate. It participates in carbohydrate degradation; 2-deoxy-D-ribose 1-phosphate degradation; D-glyceraldehyde 3-phosphate and acetaldehyde from 2-deoxy-alpha-D-ribose 1-phosphate: step 1/2. Functionally, isomerase that catalyzes the conversion of deoxy-ribose 1-phosphate (dRib-1-P) and ribose 1-phosphate (Rib-1-P) to deoxy-ribose 5-phosphate (dRib-5-P) and ribose 5-phosphate (Rib-5-P), respectively. This Staphylococcus aureus (strain Mu3 / ATCC 700698) protein is Phosphopentomutase.